The chain runs to 541 residues: MHTLIKGVLEEILEEEVIIEYPKDREHGHYATPIAFNLAKVFKKSPLVIAEELALKISTHEKTQGLFDSVVACKGYINFTLSLDFLERFTQKALELKERFGSQIKSERSQKIFLEFVSANPTGPLHIGHARGAVFGDSLAKIARFLGHEVLCEYYVNDMGSQIRLLGLSVWLAYREHVLKESVTYPEVFYKGEYIIEIAKKANNDLEPSLFKENEETIIEILSGYAKDLMLLEIKDNLDALGIHFDSYASEKEVFKHKDAVFERLEKANALYEKDSKIWLKSSLYQDESDRVLIKEDKSCTYLAGDIVYHDEKFKQNYTKYINIWGADHHGYIARVKASLEFLGHDSNKLEVLLAQMVRLLKDNEPYKMSKRAGNFILIKDVVDDVGKDALRFIFLSKRLDTHLEFDVNTLKKQDSSNPIYYIHYANSRIHTMLEKSPFSKEEVLQTPLTNLNAEEKYLLFSALSLPKAVESSFEEYGLQKMCEYAKTLASEFHRFYNAGKILDTPKAKELLKICLMVSLSLTNAFKLLGIEIKTKISAKD.

A 'HIGH' region motif is present at residues 119-129 (ANPTGPLHIGH).

This sequence belongs to the class-I aminoacyl-tRNA synthetase family. Monomer.

The protein localises to the cytoplasm. The catalysed reaction is tRNA(Arg) + L-arginine + ATP = L-arginyl-tRNA(Arg) + AMP + diphosphate. This Helicobacter pylori (strain P12) protein is Arginine--tRNA ligase.